A 459-amino-acid polypeptide reads, in one-letter code: DNA damage-inducible protein F (459 aa).

The next 12 helical transmembrane spans lie at Pro2–Leu22, Leu29–Val49, Leu63–Leu83, Leu111–Leu131, Trp154–Gln174, Val180–Gly200, Gly207–Val227, Leu265–Ile285, Ala289–Val309, Ile338–Leu358, Ile373–Ile393, and Leu416–Ala436.

This sequence belongs to the multi antimicrobial extrusion (MATE) (TC 2.A.66.1) family.

Its subcellular location is the cell inner membrane. The chain is DNA damage-inducible protein F (dinF) from Escherichia coli (strain K12).